Reading from the N-terminus, the 128-residue chain is Large ribosomal subunit protein bL12 (128 aa).

This sequence belongs to the bacterial ribosomal protein bL12 family. In terms of assembly, homodimer. Part of the ribosomal stalk of the 50S ribosomal subunit. Forms a multimeric L10(L12)X complex, where L10 forms an elongated spine to which 2 to 4 L12 dimers bind in a sequential fashion. Binds GTP-bound translation factors.

Its function is as follows. Forms part of the ribosomal stalk which helps the ribosome interact with GTP-bound translation factors. Is thus essential for accurate translation. This is Large ribosomal subunit protein bL12 from Sorangium cellulosum (strain So ce56) (Polyangium cellulosum (strain So ce56)).